Consider the following 403-residue polypeptide: DNA primase DnaG (403 aa).

The Toprim domain maps to 172–248; the sequence is DSVIIVEGRA…HIDYIARAPP (77 aa). Residues Glu178, Asp222, and Asp224 each coordinate Mg(2+). The interval 279-300 is disordered; that stretch reads AAGEKTEAPAQPTQQQPPPAEA.

The protein belongs to the archaeal DnaG primase family. As to quaternary structure, forms a ternary complex with MCM helicase and DNA. Component of the archaeal exosome complex. Requires Mg(2+) as cofactor.

The catalysed reaction is ssDNA + n NTP = ssDNA/pppN(pN)n-1 hybrid + (n-1) diphosphate.. Functionally, RNA polymerase that catalyzes the synthesis of short RNA molecules used as primers for DNA polymerase during DNA replication. Also part of the exosome, which is a complex involved in RNA degradation. Acts as a poly(A)-binding protein that enhances the interaction between heteromeric, adenine-rich transcripts and the exosome. This chain is DNA primase DnaG, found in Pyrobaculum neutrophilum (strain DSM 2338 / JCM 9278 / NBRC 100436 / V24Sta) (Thermoproteus neutrophilus).